We begin with the raw amino-acid sequence, 225 residues long: Sodium-dependent neutral amino acid transporter SLC6A17 (225 aa).

3 helical membrane passes run 1 to 8 (NVWRFPYL), 16 to 35 (AYLV…LFFL), and 60 to 80 (GIGF…NVII). The Extracellular segment spans residues 81 to 143 (GWSIFYFFKS…NSISESGGLN (63 aa)). Asn105 is a glycosylation site (N-linked (GlcNAc...) asparagine). 3 helical membrane passes run 144 to 162 (WKMT…MAVV), 171 to 188 (VMYF…CFLV), and 224 to 225 (IF).

It belongs to the sodium:neurotransmitter symporter (SNF) (TC 2.A.22) family.

It localises to the cytoplasmic vesicle. Its subcellular location is the secretory vesicle. It is found in the synaptic vesicle membrane. The protein resides in the postsynapse. The protein localises to the presynapse. The enzyme catalyses L-proline(in) + Na(+)(in) = L-proline(out) + Na(+)(out). The catalysed reaction is L-leucine(in) + Na(+)(in) = L-leucine(out) + Na(+)(out). It carries out the reaction glycine(in) + Na(+)(in) = glycine(out) + Na(+)(out). It catalyses the reaction L-alanine(in) + Na(+)(in) = L-alanine(out) + Na(+)(out). The enzyme catalyses L-glutamine(in) + Na(+)(in) = L-glutamine(out) + Na(+)(out). Its function is as follows. Synaptic vesicle transporter with apparent selectivity for neutral amino acids. The transport is sodium-coupled but chloride-independent, likely driven by the proton electrochemical gradient generated by vacuolar H(+)-ATPase in an overall electrogenic mechanism. May contribute to the synaptic uptake of neurotransmitter precursors in a process coupled in part to vesicle exocytosis. The polypeptide is Sodium-dependent neutral amino acid transporter SLC6A17 (Bos taurus (Bovine)).